The chain runs to 364 residues: DNA replication and repair protein RecF (364 aa).

Gly30 to Thr37 lines the ATP pocket.

This sequence belongs to the RecF family.

It localises to the cytoplasm. Its function is as follows. The RecF protein is involved in DNA metabolism; it is required for DNA replication and normal SOS inducibility. RecF binds preferentially to single-stranded, linear DNA. It also seems to bind ATP. The protein is DNA replication and repair protein RecF of Citrifermentans bemidjiense (strain ATCC BAA-1014 / DSM 16622 / JCM 12645 / Bem) (Geobacter bemidjiensis).